Reading from the N-terminus, the 389-residue chain is Chalcone synthase 5 (389 aa).

Cysteine 164 is an active-site residue.

This sequence belongs to the thiolase-like superfamily. Chalcone/stilbene synthases family.

The enzyme catalyses (E)-4-coumaroyl-CoA + 3 malonyl-CoA + 3 H(+) = 2',4,4',6'-tetrahydroxychalcone + 3 CO2 + 4 CoA. The protein operates within secondary metabolite biosynthesis; flavonoid biosynthesis. The primary product of this enzyme is 4,2',4',6'-tetrahydroxychalcone (also termed naringenin-chalcone or chalcone) which can under specific conditions spontaneously isomerize into naringenin. The chain is Chalcone synthase 5 (CHS5) from Trifolium subterraneum (Subterranean clover).